Reading from the N-terminus, the 304-residue chain is Cell surface-binding protein OPG105 (304 aa).

Residues 1–235 (MPQQLSPINI…NDDTQVYYSG (235 aa)) enclose the Alpha-carbonic anhydrase domain. The Virion surface segment spans residues 1 to 275 (MPQQLSPINI…YQKYIEGNKT (275 aa)). Residues 276-294 (FAIIAIVFVFILTAILFLM) form a helical membrane-spanning segment. Topologically, residues 295 to 304 (SRRYSREKQN) are intravirion.

This sequence belongs to the alpha-carbonic anhydrase family. As to quaternary structure, homodimer; disulfide-linked. Post-translationally, apparently non-glycosylated.

The protein localises to the virion membrane. Binds to chondroitin sulfate on the cell surface to provide virion attachment to target cell. The polypeptide is Cell surface-binding protein OPG105 (OPG105) (Vaccinia virus (strain Copenhagen) (VACV)).